The primary structure comprises 350 residues: Histidinol-phosphate aminotransferase 1 (350 aa).

Lys209 bears the N6-(pyridoxal phosphate)lysine mark.

Belongs to the class-II pyridoxal-phosphate-dependent aminotransferase family. Histidinol-phosphate aminotransferase subfamily. Homodimer. Pyridoxal 5'-phosphate is required as a cofactor.

It carries out the reaction L-histidinol phosphate + 2-oxoglutarate = 3-(imidazol-4-yl)-2-oxopropyl phosphate + L-glutamate. It functions in the pathway amino-acid biosynthesis; L-histidine biosynthesis; L-histidine from 5-phospho-alpha-D-ribose 1-diphosphate: step 7/9. The chain is Histidinol-phosphate aminotransferase 1 (hisC1) from Bradyrhizobium diazoefficiens (strain JCM 10833 / BCRC 13528 / IAM 13628 / NBRC 14792 / USDA 110).